The chain runs to 354 residues: Serine/threonine-protein kinase-transforming protein mos (354 aa).

The region spanning 74-350 is the Protein kinase domain; sequence VCLMHRLGSG…LLQRDLKAFR (277 aa). ATP is bound by residues 80–88 and Lys-101; that span reads LGSGGFGSV. Asp-209 functions as the Proton acceptor in the catalytic mechanism.

This sequence belongs to the protein kinase superfamily. Ser/Thr protein kinase family.

The enzyme catalyses L-seryl-[protein] + ATP = O-phospho-L-seryl-[protein] + ADP + H(+). It catalyses the reaction L-threonyl-[protein] + ATP = O-phospho-L-threonyl-[protein] + ADP + H(+). The protein is Serine/threonine-protein kinase-transforming protein mos (V-MOS) of Moloney murine sarcoma virus (strain ts110) (MoMSV).